Reading from the N-terminus, the 104-residue chain is NADH-quinone oxidoreductase subunit K (104 aa).

The next 3 helical transmembrane spans lie at 4 to 24, 31 to 51, and 67 to 87; these read VPASAYLTLAIILFCIGLFGA, VIVLVCIELMLNAANLNLVAF, and LFTMAVAAAEAAVGLAILIAL.

The protein belongs to the complex I subunit 4L family. NDH-1 is composed of 14 different subunits. Subunits NuoA, H, J, K, L, M, N constitute the membrane sector of the complex.

Its subcellular location is the cell membrane. The catalysed reaction is a quinone + NADH + 5 H(+)(in) = a quinol + NAD(+) + 4 H(+)(out). Functionally, NDH-1 shuttles electrons from NADH, via FMN and iron-sulfur (Fe-S) centers, to quinones in the respiratory chain. The immediate electron acceptor for the enzyme in this species is believed to be a menaquinone. Couples the redox reaction to proton translocation (for every two electrons transferred, four hydrogen ions are translocated across the cytoplasmic membrane), and thus conserves the redox energy in a proton gradient. The protein is NADH-quinone oxidoreductase subunit K of Bacillus cereus (strain AH820).